The chain runs to 379 residues: Homoserine O-succinyltransferase (379 aa).

In terms of domain architecture, AB hydrolase-1 spans 51-360 (NAVLICHALS…DAPQGHDAFL (310 aa)). Serine 157 functions as the Nucleophile in the catalytic mechanism. Position 227 (arginine 227) interacts with substrate. Active-site residues include aspartate 323 and histidine 356. Substrate is bound at residue aspartate 357.

This sequence belongs to the AB hydrolase superfamily. MetX family. As to quaternary structure, homodimer.

The protein resides in the cytoplasm. It carries out the reaction L-homoserine + succinyl-CoA = O-succinyl-L-homoserine + CoA. It participates in amino-acid biosynthesis; L-methionine biosynthesis via de novo pathway; O-succinyl-L-homoserine from L-homoserine: step 1/1. Transfers a succinyl group from succinyl-CoA to L-homoserine, forming succinyl-L-homoserine. In Ectopseudomonas mendocina (strain ymp) (Pseudomonas mendocina), this protein is Homoserine O-succinyltransferase.